A 220-amino-acid chain; its full sequence is Superoxide dismutase [Fe] (220 aa).

Residues His-26, His-73, Asp-164, and His-168 each contribute to the Fe cation site.

Belongs to the iron/manganese superoxide dismutase family. In terms of assembly, homodimer. Requires Fe cation as cofactor.

The catalysed reaction is 2 superoxide + 2 H(+) = H2O2 + O2. Functionally, destroys superoxide anion radicals which are normally produced within the cells and which are toxic to biological systems. This is Superoxide dismutase [Fe] (sodB) from Campylobacter coli.